The following is a 775-amino-acid chain: Glycerol-3-phosphate acyltransferase (775 aa).

The short motif at 268–273 (HRSYID) is the HXXXXD motif element.

Belongs to the GPAT/DAPAT family.

The protein resides in the cell membrane. The enzyme catalyses sn-glycerol 3-phosphate + an acyl-CoA = a 1-acyl-sn-glycero-3-phosphate + CoA. The protein operates within phospholipid metabolism; CDP-diacylglycerol biosynthesis; CDP-diacylglycerol from sn-glycerol 3-phosphate: step 1/3. This Mycobacterium leprae (strain TN) protein is Glycerol-3-phosphate acyltransferase (plsB).